A 276-amino-acid polypeptide reads, in one-letter code: Large ribosomal subunit protein uL2 (276 aa).

Residues 223 to 276 are disordered; sequence GVAMNPVDHPHGGGEGRGKGHHPTSPWGLPTKGYKTRRGKRPSDKFIVRRRNEV. Basic and acidic residues-rich tracts occupy residues 230–240 and 263–276; these read DHPHGGGEGRG and RPSD…RNEV.

Belongs to the universal ribosomal protein uL2 family. In terms of assembly, part of the 50S ribosomal subunit. Forms a bridge to the 30S subunit in the 70S ribosome.

Functionally, one of the primary rRNA binding proteins. Required for association of the 30S and 50S subunits to form the 70S ribosome, for tRNA binding and peptide bond formation. It has been suggested to have peptidyltransferase activity; this is somewhat controversial. Makes several contacts with the 16S rRNA in the 70S ribosome. This chain is Large ribosomal subunit protein uL2, found in Thermotoga maritima (strain ATCC 43589 / DSM 3109 / JCM 10099 / NBRC 100826 / MSB8).